The sequence spans 66 residues: Cytoplasmic envelopment protein 3 (66 aa).

A lipid anchor (N-myristoyl glycine; by host) is attached at Gly-2.

This sequence belongs to the herpesviridae cytoplasmic envelopment protein 3 family. As to quaternary structure, interacts with cytoplasmic envelopment protein 2; this interaction is essential for the proper localization of each protein to the assembly complex and thus for the production of infectious virus. Post-translationally, phosphorylated. Phosphorylation does not seem to be required for recycling to the host Golgi apparatus. Packaging is selective for underphosphorylated forms.

The protein resides in the virion tegument. Its subcellular location is the virion membrane. It localises to the host cell membrane. It is found in the host Golgi apparatus membrane. Functionally, plays an important role in the cytoplasmic envelopment of tegument proteins and capsids during the assembly and egress processes. Also participates in viral entry at the fusion step probably by regulating the core fusion machinery. In Saimiriine herpesvirus 2 (strain 11) (SaHV-2), this protein is Cytoplasmic envelopment protein 3 (38).